Consider the following 1099-residue polypeptide: Solute carrier family 38 member 10 (1099 aa).

Helical transmembrane passes span 9 to 31 (WGLV…PFCF), 36 to 58 (IVLG…MFLV), 84 to 104 (LVET…YVVI), 123 to 143 (TFRV…LSLQ), 153 to 173 (FSAM…LSSF), 229 to 249 (IFAS…FFGY), 272 to 292 (MIRV…ILPC), 323 to 343 (VLTL…PNVE), 345 to 365 (ILGF…PALI), and 378 to 398 (VVLW…LSVS). Disordered regions lie at residues 440–679 (DSQE…EEAG) and 720–1047 (EIRQ…LAPK). Phosphoserine is present on serine 441. 5 stretches are compositionally biased toward basic and acidic residues: residues 441-454 (SQEK…KEVL), 493-508 (EAHR…KVVV), 517-528 (PEEKKPPPKLPD), 544-561 (ESEK…KRPE), and 586-599 (PRKE…RDLH). Serine 607 and serine 635 each carry phosphoserine. Composition is skewed to basic and acidic residues over residues 653–663 (EAAEQREKNEA), 720–735 (EIRQ…KPKP), and 749–766 (GQEE…HAGE). Residues 698–734 (VQQKRLLDQQEKLLAVIEEQHKEIRQQRQEGEEDKPK) adopt a coiled-coil conformation. Threonine 767 carries the post-translational modification Phosphothreonine. 5 stretches are compositionally biased toward basic and acidic residues: residues 793–802 (KGQHPLEEVK), 852–894 (EPVH…ETGK), 917–928 (EDSHSKSRHSEP), 957–969 (KSQD…RSEG), and 1010–1022 (QKPE…RDLK). The residue at position 886 (serine 886) is a Phosphoserine.

The protein belongs to the amino acid/polyamine transporter 2 family. As to expression, only expressed in the pituitary, adrenal gland, stomach and in the upper gastrointestinal tract.

The protein resides in the membrane. It carries out the reaction L-glutamate(out) = L-glutamate(in). The catalysed reaction is L-glutamine(out) = L-glutamine(in). It catalyses the reaction L-alanine(in) = L-alanine(out). The enzyme catalyses L-serine(in) = L-serine(out). It carries out the reaction L-leucine(in) = L-leucine(out). Its function is as follows. Facilitates bidirectional transport of amino acids. May act as a glutamate sensor that regulates glutamate-glutamine cycle and mTOR signaling in the brain. The transport mechanism remains to be elucidated. This chain is Solute carrier family 38 member 10, found in Rattus norvegicus (Rat).